The sequence spans 497 residues: MKSSTMSPMYAAIDLGSNSFHMLVVRHINGSVQTMAKIKRKVRLAAGLNENNTLSHEAMQRGWDCLSLFAERLQDIPVENIRIVGTATLRVASNVDIFLEKANQILGHNINVIEGEEEARMIYQGVAHTSGGNGRRLVVDIGGASTELIIGEGFEAQALTSLKMGCVTWLEGYFKDRALTQKNFNAAIAGAKETLAPILQQYTDLGWQTCVGASGTVQALQEIMLAQGMDEVITLAKLKRLQKQAMQYEHLEELDIDGLTLERALVFPSGLSILIAIFELLNIDSMTLAGGALREGLCYGMIDELQHDEVCQRTIKSTQQRYQLDVDYAQQVTDLSIQLVQQCGNDWLIEPQALPLLTAATQLHEIGMCIDYKKGGEHSAYLINALDLPGFTRAQKHLLGELLRRYREYFSAMPTQHAVSDISAQRMLRILRLAIILTHRRDVNLAPTVTLSEKNDVLSLSIDGAWLAANPLTRSELEIEADKQTNIGWELVIDARD.

This sequence belongs to the GppA/Ppx family. GppA subfamily.

It catalyses the reaction guanosine 3'-diphosphate 5'-triphosphate + H2O = guanosine 3',5'-bis(diphosphate) + phosphate + H(+). The protein operates within purine metabolism; ppGpp biosynthesis; ppGpp from GTP: step 2/2. Its function is as follows. Catalyzes the conversion of pppGpp to ppGpp. Guanosine pentaphosphate (pppGpp) is a cytoplasmic signaling molecule which together with ppGpp controls the 'stringent response', an adaptive process that allows bacteria to respond to amino acid starvation, resulting in the coordinated regulation of numerous cellular activities. The protein is Guanosine-5'-triphosphate,3'-diphosphate pyrophosphatase of Aliivibrio fischeri (strain ATCC 700601 / ES114) (Vibrio fischeri).